The following is a 145-amino-acid chain: D-aminoacyl-tRNA deacylase (145 aa).

Positions Gly137–Pro138 match the Gly-cisPro motif, important for rejection of L-amino acids motif.

It belongs to the DTD family. Homodimer.

The protein localises to the cytoplasm. It catalyses the reaction glycyl-tRNA(Ala) + H2O = tRNA(Ala) + glycine + H(+). It carries out the reaction a D-aminoacyl-tRNA + H2O = a tRNA + a D-alpha-amino acid + H(+). Functionally, an aminoacyl-tRNA editing enzyme that deacylates mischarged D-aminoacyl-tRNAs. Also deacylates mischarged glycyl-tRNA(Ala), protecting cells against glycine mischarging by AlaRS. Acts via tRNA-based rather than protein-based catalysis; rejects L-amino acids rather than detecting D-amino acids in the active site. By recycling D-aminoacyl-tRNA to D-amino acids and free tRNA molecules, this enzyme counteracts the toxicity associated with the formation of D-aminoacyl-tRNA entities in vivo and helps enforce protein L-homochirality. The protein is D-aminoacyl-tRNA deacylase of Aeromonas hydrophila subsp. hydrophila (strain ATCC 7966 / DSM 30187 / BCRC 13018 / CCUG 14551 / JCM 1027 / KCTC 2358 / NCIMB 9240 / NCTC 8049).